The sequence spans 404 residues: Probable tRNA sulfurtransferase (404 aa).

Residues 61–166 (EAISERLKDV…SGYSYIMCGE (106 aa)) form the THUMP domain. Residues 184-185 (LL), 209-210 (HF), arginine 266, glycine 288, and glutamine 297 each bind ATP.

It belongs to the ThiI family.

Its subcellular location is the cytoplasm. The catalysed reaction is [ThiI sulfur-carrier protein]-S-sulfanyl-L-cysteine + a uridine in tRNA + 2 reduced [2Fe-2S]-[ferredoxin] + ATP + H(+) = [ThiI sulfur-carrier protein]-L-cysteine + a 4-thiouridine in tRNA + 2 oxidized [2Fe-2S]-[ferredoxin] + AMP + diphosphate. The enzyme catalyses [ThiS sulfur-carrier protein]-C-terminal Gly-Gly-AMP + S-sulfanyl-L-cysteinyl-[cysteine desulfurase] + AH2 = [ThiS sulfur-carrier protein]-C-terminal-Gly-aminoethanethioate + L-cysteinyl-[cysteine desulfurase] + A + AMP + 2 H(+). The protein operates within cofactor biosynthesis; thiamine diphosphate biosynthesis. In terms of biological role, catalyzes the ATP-dependent transfer of a sulfur to tRNA to produce 4-thiouridine in position 8 of tRNAs, which functions as a near-UV photosensor. Also catalyzes the transfer of sulfur to the sulfur carrier protein ThiS, forming ThiS-thiocarboxylate. This is a step in the synthesis of thiazole, in the thiamine biosynthesis pathway. The sulfur is donated as persulfide by IscS. The chain is Probable tRNA sulfurtransferase from Bacillus cereus (strain G9842).